The sequence spans 248 residues: 14-3-3-like protein G-BOX factor 14 lambda (248 aa).

Serine 70, serine 112, and serine 193 each carry phosphoserine; by CRPK1. Residue threonine 214 is modified to Phosphothreonine; by CRPK1.

This sequence belongs to the 14-3-3 family. In terms of assembly, interacts with SERK1 in the cell membrane. Component of the SERK1 signaling complex, composed of KAPP, CDC48A, GRF6 or GRF7, SERK1, SERK2, SERK3/BAK1 and BRI1. Interacts with TPK1. Interacts with ADF1. Binds to CRPK1 at the plasma membrane. Interacts with DREB1A and DREB1B in the nucleus when activated by CRPK1-mediated phosphorylation upon freezing. Interacts with CINV1. Binds to the N-terminal region of B1L. In terms of processing, transphosphorylated by SERK1. Post-translationally, phosphorylated by CRPK1 in response to cold.

Its subcellular location is the nucleus. The protein localises to the cell membrane. The protein resides in the cytoplasm. Is associated with a DNA binding complex that binds to the G box, a well-characterized cis-acting DNA regulatory element found in plant genes. Specific negative regulator of slow-vacuolar (SV) ion channel. Mediates F-actin dynamics possibly through inhibiting ADF1 phosphorylation. Negative regulator of freezing tolerance that modulates cold-responsive C-repeat-binding factors (CBF) DREB1A and DREB1B proteins stability by facilitating their ubiquitin-mediated degradation when activated by CRPK1-mediated phosphorylation in freezing conditions; this processus is counteracted by B1L. This Arabidopsis thaliana (Mouse-ear cress) protein is 14-3-3-like protein G-BOX factor 14 lambda.